The primary structure comprises 417 residues: Cysteate synthase (417 aa).

N6-(pyridoxal phosphate)lysine is present on lysine 104. Positions 131 and 371 each coordinate pyridoxal 5'-phosphate.

Belongs to the threonine synthase family. Cysteate synthase subfamily. Homotrimer. Pyridoxal 5'-phosphate is required as a cofactor.

It catalyses the reaction O-phospho-L-serine + sulfite + H(+) = L-cysteate + phosphate. Its pathway is cofactor biosynthesis; coenzyme M biosynthesis. Functionally, specifically catalyzes the beta-elimination of phosphate from L-phosphoserine and the beta-addition of sulfite to the dehydroalanine intermediate to produce L-cysteate. The sequence is that of Cysteate synthase from Methanococcoides burtonii (strain DSM 6242 / NBRC 107633 / OCM 468 / ACE-M).